The chain runs to 202 residues: MARYTGPKARINRRLGTMLYETAGAARAMDRRPQPPGMHTRGRRPSNYGAALMEKQKIKHYYGLGERQLRRYFENVGRKSGNTGELLLLMCERRLDNVVRRVGFTKTRPQARQGITHGHFRVNGVKVTKPGYMLRAGDLIEVRGRENLKNLYRGVIANSPPDGLDWVSFDSETLRATVLSLPGAVDISLPVDANSVVEFLSR.

The S4 RNA-binding domain occupies 93–155 (RRLDNVVRRV…ENLKNLYRGV (63 aa)).

It belongs to the universal ribosomal protein uS4 family. Part of the 30S ribosomal subunit. Contacts protein S5. The interaction surface between S4 and S5 is involved in control of translational fidelity.

In terms of biological role, one of the primary rRNA binding proteins, it binds directly to 16S rRNA where it nucleates assembly of the body of the 30S subunit. Functionally, with S5 and S12 plays an important role in translational accuracy. In Rhodopirellula baltica (strain DSM 10527 / NCIMB 13988 / SH1), this protein is Small ribosomal subunit protein uS4.